Reading from the N-terminus, the 957-residue chain is Glycine dehydrogenase (decarboxylating) (957 aa).

Lysine 708 is modified (N6-(pyridoxal phosphate)lysine).

This sequence belongs to the GcvP family. The glycine cleavage system is composed of four proteins: P, T, L and H. It depends on pyridoxal 5'-phosphate as a cofactor.

The catalysed reaction is N(6)-[(R)-lipoyl]-L-lysyl-[glycine-cleavage complex H protein] + glycine + H(+) = N(6)-[(R)-S(8)-aminomethyldihydrolipoyl]-L-lysyl-[glycine-cleavage complex H protein] + CO2. In terms of biological role, the glycine cleavage system catalyzes the degradation of glycine. The P protein binds the alpha-amino group of glycine through its pyridoxal phosphate cofactor; CO(2) is released and the remaining methylamine moiety is then transferred to the lipoamide cofactor of the H protein. This is Glycine dehydrogenase (decarboxylating) from Salmonella arizonae (strain ATCC BAA-731 / CDC346-86 / RSK2980).